Consider the following 153-residue polypeptide: DNA gyrase inhibitor 1 (153 aa).

This sequence belongs to the DNA gyrase inhibitor family. In terms of assembly, interacts with DNA gyrase.

It localises to the cytoplasm. In terms of biological role, inhibits the supercoiling activity of DNA gyrase. Acts by inhibiting DNA gyrase at an early step, prior to (or at the step of) binding of DNA by the gyrase. It protects cells against toxins that target DNA gyrase, by inhibiting activity of these toxins and reducing the formation of lethal double-strand breaks in the cell. This chain is DNA gyrase inhibitor 1, found in Dickeya dadantii (strain 3937) (Erwinia chrysanthemi (strain 3937)).